A 1220-amino-acid chain; its full sequence is DNA-directed RNA polymerase subunit beta (1220 aa).

Belongs to the RNA polymerase beta chain family. As to quaternary structure, the RNAP catalytic core consists of 2 alpha, 1 beta, 1 beta' and 1 omega subunit. When a sigma factor is associated with the core the holoenzyme is formed, which can initiate transcription.

The catalysed reaction is RNA(n) + a ribonucleoside 5'-triphosphate = RNA(n+1) + diphosphate. Its function is as follows. DNA-dependent RNA polymerase catalyzes the transcription of DNA into RNA using the four ribonucleoside triphosphates as substrates. This chain is DNA-directed RNA polymerase subunit beta, found in Mesomycoplasma hyopneumoniae (strain 7448) (Mycoplasma hyopneumoniae).